A 95-amino-acid chain; its full sequence is Aspartyl/glutamyl-tRNA(Asn/Gln) amidotransferase subunit C (95 aa).

This sequence belongs to the GatC family. In terms of assembly, heterotrimer of A, B and C subunits.

The catalysed reaction is L-glutamyl-tRNA(Gln) + L-glutamine + ATP + H2O = L-glutaminyl-tRNA(Gln) + L-glutamate + ADP + phosphate + H(+). It carries out the reaction L-aspartyl-tRNA(Asn) + L-glutamine + ATP + H2O = L-asparaginyl-tRNA(Asn) + L-glutamate + ADP + phosphate + 2 H(+). In terms of biological role, allows the formation of correctly charged Asn-tRNA(Asn) or Gln-tRNA(Gln) through the transamidation of misacylated Asp-tRNA(Asn) or Glu-tRNA(Gln) in organisms which lack either or both of asparaginyl-tRNA or glutaminyl-tRNA synthetases. The reaction takes place in the presence of glutamine and ATP through an activated phospho-Asp-tRNA(Asn) or phospho-Glu-tRNA(Gln). This is Aspartyl/glutamyl-tRNA(Asn/Gln) amidotransferase subunit C from Dechloromonas aromatica (strain RCB).